Reading from the N-terminus, the 348-residue chain is Eukaryotic translation initiation factor 3 subunit I (348 aa).

WD repeat units lie at residues 8–49, 51–91, 93–135, 147–186, 196–238, and 294–333; these read GHER…GTFE, HMGT…YTYE, PTPV…PKNQ, DGAKKVTIAGWSAGGKYIIAGHEDGLVSKYDGATGEFIDS, EKIH…KVYK, and GHFGPLNTIAVHPDGTGYASGGEDGFIRLHSFDKSYYDFE.

The protein belongs to the eIF-3 subunit I family. As to quaternary structure, component of the eukaryotic translation initiation factor 3 (eIF-3) complex.

It localises to the cytoplasm. Functionally, component of the eukaryotic translation initiation factor 3 (eIF-3) complex, which is involved in protein synthesis of a specialized repertoire of mRNAs and, together with other initiation factors, stimulates binding of mRNA and methionyl-tRNAi to the 40S ribosome. The eIF-3 complex specifically targets and initiates translation of a subset of mRNAs involved in cell proliferation. This is Eukaryotic translation initiation factor 3 subunit I from Meyerozyma guilliermondii (strain ATCC 6260 / CBS 566 / DSM 6381 / JCM 1539 / NBRC 10279 / NRRL Y-324) (Yeast).